Reading from the N-terminus, the 141-residue chain is Hemoglobin subunit beta-C (141 aa).

The 141-residue stretch at 1-141 folds into the Globin domain; the sequence is PNKALITGFW…VASALAHRYH (141 aa). Heme b is bound by residues histidine 58 and histidine 87.

It belongs to the globin family. As to quaternary structure, heterotetramer of two alpha chains and two beta chains. Red blood cells.

Involved in oxygen transport from the lung to the various peripheral tissues. The protein is Hemoglobin subunit beta-C of Ammotragus lervia (Barbary sheep).